Consider the following 146-residue polypeptide: Snaclec mamushigin subunit beta (146 aa).

A signal peptide spans 1-23 (MGRFIFLSFGLLVVFVSLSGTGA). Cystine bridges form between Cys-25/Cys-36, Cys-53/Cys-142, and Cys-119/Cys-134. Residues 32–143 (YEGHCYRVFQ…CSRTYNVVCK (112 aa)) enclose the C-type lectin domain.

In terms of assembly, heterodimer of subunits alpha and beta; disulfide-linked. In terms of tissue distribution, expressed by the venom gland.

It is found in the secreted. In terms of biological role, binds to platelet GPIbalpha (GP1BA) and enhances platelet aggregation at low-shear stress. At high-shear stress, blocks platelet aggregation in a dose-dependent manner. This Gloydius blomhoffii (Mamushi) protein is Snaclec mamushigin subunit beta.